The primary structure comprises 489 residues: MVAFSAILQTALGLSAANDLTSLFGPYLSPQAEILYGNDTNFYAQLQQRWTDYKAPSYGAGAIKPATAKDVQNVVKIANANSIPFFVTGGGHGISDYHNFDGLSIDMGKFNTVERNAAGDRLTIGGAVKIHQLTKPLAEWGKELPLGSCACVGVVGATLGGGIGSLHGLRGLLVDYLEEVEVVTASGDLIKASETEHKDLFWALRGAGSNYGIVTSATYRLPEVTNKGVYVNADYVYPVSANQSFFEVLEQFDNTLPPRLAITGASFFDRVNNKPVIAVNAVFFGPLEEALPHLQPFESLQPEMKNVSSIPAEQMMDAAFFSFFGMDNGACTPNQHINIYTVALRQIHAPTFQSFYSKLVDFWNANPTYQGRLLIQRYSNEGPMAVPDDATAYAYRDVKTYMNIEGFYADSALDDAVNEFATLGRQEFVETSGFDQLAVYSNYARGDEGPVAWYGERKLPKLSALKRKWDPEQRFSVNNPVPLHWRTEL.

An N-terminal signal peptide occupies residues 1–17 (MVAFSAILQTALGLSAA). A glycan (N-linked (GlcNAc...) asparagine) is linked at asparagine 38. One can recognise an FAD-binding PCMH-type domain in the interval 55–224 (APSYGAGAIK…TSATYRLPEV (170 aa)). Residues asparagine 242 and asparagine 306 are each glycosylated (N-linked (GlcNAc...) asparagine).

The protein belongs to the oxygen-dependent FAD-linked oxidoreductase family. FAD serves as cofactor.

The protein operates within secondary metabolite biosynthesis. Its function is as follows. FAD-linked oxidoreductase; part of the gene cluster that mediates the biosynthesis of azaterrilone A and other azaphilones, a class of fungal metabolites characterized by a highly oxygenated pyrano-quinone bicyclic core and exhibiting a broad range of bioactivities. The first step of the pathway begins with the non-reducing polyketide synthase tazA that assembles one acetyl-CoA starter unit, five malonyl-CoA units, and catalyzes a series of Claisen condensations, methylation, PT-mediated cyclization, and finally releases the first hexaketide precursor through the R-domain. The tazA product then undergoes reduction on its terminal ketone and the following pyran-ring formation by yet undetermined enzyme(s). Dehydration and enoyl reduction, possibly involving the trans-enoyl reductase tazE leads to the next intermediate. TazD is predicted as an acetyltransferase and might catalyze the acetylation steps leading to the synthesis of azaterrilone A. Azaterrilone A is not the final product of the taz pathway and both the highly reducing polyketide synthase tazB and the dual enzyme tazHJ catalyze late steps of the pathway, leading to the production of the 2 final stereoisomers that contain additional polyketide modification whose structures have still to be determined. This chain is FAD-linked oxidoreductase tazG, found in Aspergillus terreus (strain NIH 2624 / FGSC A1156).